The primary structure comprises 305 residues: Acetyl-coenzyme A carboxylase carboxyl transferase subunit beta (305 aa).

Residues 29-298 (LWTKCESCDA…EMKLPLLESS (270 aa)) enclose the CoA carboxyltransferase N-terminal domain. Residues cysteine 33, cysteine 36, cysteine 52, and cysteine 55 each contribute to the Zn(2+) site. Residues 33–55 (CESCDALTYTKDLQANLMVCLQC) form a C4-type zinc finger.

It belongs to the AccD/PCCB family. In terms of assembly, acetyl-CoA carboxylase is a heterohexamer composed of biotin carboxyl carrier protein (AccB), biotin carboxylase (AccC) and two subunits each of ACCase subunit alpha (AccA) and ACCase subunit beta (AccD). The cofactor is Zn(2+).

It localises to the cytoplasm. It carries out the reaction N(6)-carboxybiotinyl-L-lysyl-[protein] + acetyl-CoA = N(6)-biotinyl-L-lysyl-[protein] + malonyl-CoA. It participates in lipid metabolism; malonyl-CoA biosynthesis; malonyl-CoA from acetyl-CoA: step 1/1. Component of the acetyl coenzyme A carboxylase (ACC) complex. Biotin carboxylase (BC) catalyzes the carboxylation of biotin on its carrier protein (BCCP) and then the CO(2) group is transferred by the transcarboxylase to acetyl-CoA to form malonyl-CoA. The sequence is that of Acetyl-coenzyme A carboxylase carboxyl transferase subunit beta from Synechococcus sp. (strain ATCC 27144 / PCC 6301 / SAUG 1402/1) (Anacystis nidulans).